A 356-amino-acid polypeptide reads, in one-letter code: Phospho-2-dehydro-3-deoxyheptonate aldolase, Tyr-sensitive (356 aa).

It belongs to the class-I DAHP synthase family. A divalent metal cation is required as a cofactor.

The enzyme catalyses D-erythrose 4-phosphate + phosphoenolpyruvate + H2O = 7-phospho-2-dehydro-3-deoxy-D-arabino-heptonate + phosphate. Its pathway is metabolic intermediate biosynthesis; chorismate biosynthesis; chorismate from D-erythrose 4-phosphate and phosphoenolpyruvate: step 1/7. Specifically feedback inhibited by tyrosine with 50% inhibition observed at 9 microM tyrosine, pH 7.0. Functionally, stereospecific condensation of phosphoenolpyruvate (PEP) and D-erythrose-4-phosphate (E4P) giving rise to 3-deoxy-D-arabino-heptulosonate-7-phosphate (DAHP). The polypeptide is Phospho-2-dehydro-3-deoxyheptonate aldolase, Tyr-sensitive (aroF) (Escherichia coli (strain K12)).